The primary structure comprises 71 residues: Lantibiotic Flvbeta.c (71 aa).

Positions 1-33 are cleaved as a propeptide — cleaved by FlvT; the sequence is MENKFDMEKFKKLAAVVSEDELDTLLDETTVGA. The segment at residues 35–39 is a cross-link (lanthionine (Ser-Cys); by FlvM2); sequence SSNDC. 2,3-didehydroalanine (Ser); by FlvM2 is present on Ser36. 3 consecutive cross-links (beta-methyllanthionine (Thr-Cys); by FlvM2) follow at residues 54-60, 62-65, and 66-69; these read TSKFDWC, TGAC, and TTSC.

In terms of processing, contains LL-lanthionine and DL-beta-methyllanthionine, when coepressed in E.coli with the flavecin synthetase FlvM2.

Its subcellular location is the secreted. Lanthionine-containing peptide antibiotic (lantibiotic) that is probably active on Gram-positive bacteria, since its analog [Del1]Flvbeta.c shows antibacterial activity against M.luteus. This activity is not synergistically enhanced by [Del2]Flvalpha.a, an analog of Flvalpha.a, which is encoded by the same operon than Flvbeta.c. The bactericidal activity of lantibiotics is based on depolarization of energized bacterial cytoplasmic membranes, initiated by the formation of aqueous transmembrane pores. This is Lantibiotic Flvbeta.c from Ruminococcus flavefaciens.